Here is a 2133-residue protein sequence, read N- to C-terminus: Coagulation factor VIII (2133 aa).

An N-terminal signal peptide occupies residues 1-19; it reads MQLELSTCVFLCLLPLGFS. Plastocyanin-like domains are found at residues 20 to 199, 207 to 357, 399 to 573, and 583 to 730; these read AIRR…LLVC, ERTQ…QLRR, KTWV…LLIC, and NQMM…VYSC. 2 consecutive F5/8 type A domains span residues 20–357 and 399–730; these read AIRR…QLRR and KTWV…VYSC. C173 and C199 are joined by a disulfide. N-linked (GlcNAc...) asparagine glycans are attached at residues N233 and N259. A disulfide bond links C547 and C573. An N-linked (GlcNAc...) asparagine glycan is attached at N601. Y737, Y738, and Y742 each carry sulfotyrosine. Disordered regions lie at residues 760–790 and 804–914; these read SFAQ…LDPQ and PSGD…PHPQ. The segment at 760 to 1599 is b; that stretch reads SFAQNSRPPS…LISYPDDQEQ (840 aa). The segment covering 761 to 780 has biased composition (polar residues); sequence FAQNSRPPSASQKQFQTITS. Basic and acidic residues-rich tracts occupy residues 853 to 862 and 868 to 878; these read LRPELHHSAE and EPEKELKKLDS. Low complexity predominate over residues 879–888; it reads KMSSSSDLLK. The span at 889 to 900 shows a compositional bias: polar residues; sequence TSPTIPSDTLSA. N929, N985, and N1025 each carry an N-linked (GlcNAc...) asparagine glycan. The segment at 1042–1078 is disordered; sequence LGKNPLSSERGPSPELLTSSGSGKSVKGQSSGQGRIR. Over residues 1060–1075 the composition is skewed to low complexity; the sequence is SSGSGKSVKGQSSGQG. The N-linked (GlcNAc...) asparagine glycan is linked to N1111. Residues 1160–1179 are disordered; that stretch reads PSVEGFDGGSHAPVPQDSRS. N-linked (GlcNAc...) asparagine glycans are attached at residues N1181, N1208, N1245, N1265, and N1335. Residues 1200 to 1221 are disordered; that stretch reads EAPLEAPGNRTGPGPRSAVPRR. Disordered regions lie at residues 1358–1391 and 1406–1441; these read LNKV…KSTA and ESNH…APKP. Over residues 1378 to 1387 the composition is skewed to basic and acidic residues; it reads KEWESLEKSP. N-linked (GlcNAc...) asparagine glycosylation is found at N1408 and N1611. Plastocyanin-like domains are found at residues 1495 to 1659 and 1669 to 1822; these read RTRH…LLIC and GRQV…SKEC. The region spanning 1495 to 1822 is the F5/8 type A 3 domain; the sequence is RTRHYFIAAV…TTFLVYSKEC (328 aa). Disulfide bonds link C1633-C1659, C1822-C1970, and C1975-C2127. F5/8 type C domains lie at 1822 to 1970 and 1975 to 2127; these read CQAP…LMGC and CSMP…VLGC. A glycan (N-linked (GlcNAc...) asparagine) is linked at N1919.

The protein belongs to the multicopper oxidase family. As to quaternary structure, interacts with vWF. vWF binding is essential for the stabilization of F8 in circulation. Post-translationally, proteolytically cleaved by cathepsin CTSG to produce a partially activated form.

The protein resides in the secreted. The protein localises to the extracellular space. In terms of biological role, factor VIII, along with calcium and phospholipid, acts as a cofactor for factor IXa when it converts factor X to the activated form, factor Xa. The polypeptide is Coagulation factor VIII (F8) (Sus scrofa (Pig)).